Consider the following 499-residue polypeptide: Glycerol kinase 2 (499 aa).

Thr-13 contributes to the ADP binding site. The ATP site is built by Thr-13, Thr-14, and Ser-15. Residue Thr-13 participates in sn-glycerol 3-phosphate binding. ADP is bound at residue Arg-17. Residues Arg-83, Glu-84, Tyr-134, and Asp-241 each contribute to the sn-glycerol 3-phosphate site. Residues Arg-83, Glu-84, Tyr-134, Asp-241, and Gln-242 each coordinate glycerol. ADP-binding residues include Thr-263 and Gly-306. ATP is bound by residues Thr-263, Gly-306, Gln-310, and Gly-407. Gly-407 is an ADP binding site.

This sequence belongs to the FGGY kinase family.

The enzyme catalyses glycerol + ATP = sn-glycerol 3-phosphate + ADP + H(+). Its pathway is polyol metabolism; glycerol degradation via glycerol kinase pathway; sn-glycerol 3-phosphate from glycerol: step 1/1. Key enzyme in the regulation of glycerol uptake and metabolism. Catalyzes the phosphorylation of glycerol to yield sn-glycerol 3-phosphate. In Saccharolobus solfataricus (strain ATCC 35092 / DSM 1617 / JCM 11322 / P2) (Sulfolobus solfataricus), this protein is Glycerol kinase 2.